The chain runs to 114 residues: Superoxide dismutase [Cu-Zn] (114 aa).

Residues H37, H39, and H54 each contribute to the Cu cation site. Residues 48–68 (CMSSGPHFNPRNKEHGAPTDE) form a disordered region. 4 residues coordinate Zn(2+): H54, H62, H71, and D74. The span at 58–68 (RNKEHGAPTDE) shows a compositional bias: basic and acidic residues. A Cu cation-binding site is contributed by H111.

Belongs to the Cu-Zn superoxide dismutase family. Homodimer. Requires Cu cation as cofactor. The cofactor is Zn(2+).

Its subcellular location is the cytoplasm. It catalyses the reaction 2 superoxide + 2 H(+) = H2O2 + O2. In terms of biological role, destroys radicals which are normally produced within the cells and which are toxic to biological systems. This Drosophila miranda (Fruit fly) protein is Superoxide dismutase [Cu-Zn].